Consider the following 427-residue polypeptide: Trigger factor (427 aa).

Residues 163–248 enclose the PPIase FKBP-type domain; it reads GDTVILDFEG…LHEIKTKEVP (86 aa).

The protein belongs to the FKBP-type PPIase family. Tig subfamily.

It localises to the cytoplasm. The enzyme catalyses [protein]-peptidylproline (omega=180) = [protein]-peptidylproline (omega=0). Functionally, involved in protein export. Acts as a chaperone by maintaining the newly synthesized protein in an open conformation. Functions as a peptidyl-prolyl cis-trans isomerase. This Listeria monocytogenes serotype 4a (strain HCC23) protein is Trigger factor.